Here is a 239-residue protein sequence, read N- to C-terminus: MTSLIFKNVTMSYPIYNAHSQSLRNQLVRVSTGGRIGGSRGEVVTVTALDNISFELNSGDSVGLIGHNGAGKSTLLRTMAGIYPASSGEIIREGSVATVFELGAGMDPELSGYENIMRMLLLLGNSVASAKSKIPEIEEFCELGDFLVLPVRTYSSGMTMRLMFAVATSMRPEILLIDEMFGTGDAAFQEKAEKRMRDWIAGSDIFVFASHDRSLIKKLCNRIFRLEHGLIYEESMDIL.

In terms of domain architecture, ABC transporter spans 28 to 239 (VRVSTGGRIG…LIYEESMDIL (212 aa)). ATP is bound at residue 66 to 73 (GHNGAGKS).

This sequence belongs to the ABC transporter superfamily.

It localises to the cell inner membrane. In terms of biological role, may form an ATP-driven O-antigen export apparatus, in association with RfbD. This chain is O-antigen export system ATP-binding protein RfbE (rfbE), found in Yersinia enterocolitica.